Here is a 127-residue protein sequence, read N- to C-terminus: Fluoride-specific ion channel FluC (127 aa).

Helical transmembrane passes span 7–27 (LLVA…GAWV), 31–51 (LGAG…FLIG), 68–88 (LFLA…SYET), and 97–117 (VGKA…LAFL). Residues G76 and T79 each contribute to the Na(+) site.

The protein belongs to the fluoride channel Fluc/FEX (TC 1.A.43) family.

It localises to the cell inner membrane. The catalysed reaction is fluoride(in) = fluoride(out). Its activity is regulated as follows. Na(+) is not transported, but it plays an essential structural role and its presence is essential for fluoride channel function. In terms of biological role, fluoride-specific ion channel. Important for reducing fluoride concentration in the cell, thus reducing its toxicity. The sequence is that of Fluoride-specific ion channel FluC from Thermus thermophilus (strain ATCC BAA-163 / DSM 7039 / HB27).